Consider the following 273-residue polypeptide: Hydroxyethylthiazole kinase (273 aa).

M41 lines the substrate pocket. Residues R117 and T170 each coordinate ATP. Position 197 (G197) interacts with substrate.

This sequence belongs to the Thz kinase family. It depends on Mg(2+) as a cofactor.

The enzyme catalyses 5-(2-hydroxyethyl)-4-methylthiazole + ATP = 4-methyl-5-(2-phosphooxyethyl)-thiazole + ADP + H(+). It participates in cofactor biosynthesis; thiamine diphosphate biosynthesis; 4-methyl-5-(2-phosphoethyl)-thiazole from 5-(2-hydroxyethyl)-4-methylthiazole: step 1/1. Its function is as follows. Catalyzes the phosphorylation of the hydroxyl group of 4-methyl-5-beta-hydroxyethylthiazole (THZ). The sequence is that of Hydroxyethylthiazole kinase from Clostridium acetobutylicum (strain ATCC 824 / DSM 792 / JCM 1419 / IAM 19013 / LMG 5710 / NBRC 13948 / NRRL B-527 / VKM B-1787 / 2291 / W).